The sequence spans 237 residues: UPF0502 protein RB6530 (237 aa).

Over residues 187–202 (ASSAAPSQAESGSTSP) the composition is skewed to polar residues. Residues 187–211 (ASSAAPSQAESGSTSPAKAANDDRI) form a disordered region.

Belongs to the UPF0502 family.

The chain is UPF0502 protein RB6530 from Rhodopirellula baltica (strain DSM 10527 / NCIMB 13988 / SH1).